Consider the following 438-residue polypeptide: Ribosomal protein uS12 methylthiotransferase RimO (438 aa).

The MTTase N-terminal domain maps to lysine 6–asparagine 118. 6 residues coordinate [4Fe-4S] cluster: cysteine 15, cysteine 49, cysteine 81, cysteine 150, cysteine 154, and cysteine 157. Positions threonine 136–asparagine 364 constitute a Radical SAM core domain.

This sequence belongs to the methylthiotransferase family. RimO subfamily. Requires [4Fe-4S] cluster as cofactor.

The protein localises to the cytoplasm. It catalyses the reaction L-aspartate(89)-[ribosomal protein uS12]-hydrogen + (sulfur carrier)-SH + AH2 + 2 S-adenosyl-L-methionine = 3-methylsulfanyl-L-aspartate(89)-[ribosomal protein uS12]-hydrogen + (sulfur carrier)-H + 5'-deoxyadenosine + L-methionine + A + S-adenosyl-L-homocysteine + 2 H(+). In terms of biological role, catalyzes the methylthiolation of an aspartic acid residue of ribosomal protein uS12. The sequence is that of Ribosomal protein uS12 methylthiotransferase RimO from Helicobacter acinonychis (strain Sheeba).